A 136-amino-acid polypeptide reads, in one-letter code: Large ribosomal subunit protein uL16 (136 aa).

The protein belongs to the universal ribosomal protein uL16 family. Part of the 50S ribosomal subunit.

Its function is as follows. Binds 23S rRNA and is also seen to make contacts with the A and possibly P site tRNAs. In Ehrlichia ruminantium (strain Gardel), this protein is Large ribosomal subunit protein uL16.